A 950-amino-acid polypeptide reads, in one-letter code: MLPLPSELQIQAQNIQQRFYELPAPLSLREEDIAVLVLSDFVSDMLLIHPDWLDELHQQPPQPQEWQFYQQWLSQALAEVQDEAALLAALRLFRRRIMVRIAWSQALETSSTTDTLQQLSWLAESLIIAARDWLYQACCREFGTPCNSEGVPQPLLILGMGKLGGGELNFSSDIDLIFAYPENGQTQGGRRQLDNAQFFTRLGQRLIKALDQQTIDGFVYRVDMRLRPFGDSGPLVLSFAALEDYYQEQGRDWERYAMVKARLMGGAEDHYSKELRQTLRPFVFRRYIDFSVIQSLRNMKGMIAREVRRRGLKDNIKLGAGGIREIEFITQVFQLIRGGREPRLQERALLPTLQAVAELGLLPEQQVADLSGSYLFLRRLENLLQAIADEQTQTLPSDSLNQARLACGMGYVDWVAMNAALEQHMQAVRLVFDHLIGDDAPDIGEDPSHGLYKSLWQDVLEEGDLAPLTPHLDEAARSQLLVTINHFRHDVDKRTIGPRGREVLDQLMPRLFAEVCPRPDANVALSRLIQLLLSIVTRTTYLELLVEYHAALKHVIRLCSASPMVASQLARYPLLLDELLDPQSLYQPLEPSAYRDELRQYLLRVPPDDEEQQLEALRQFKQAQQLRIAAGDITEALPVMKVSDHLTYLAEAMIDAVIQQAWNQMVARYGQPSHLQQREGRGFAVIGYGKLGGWELGYSSDLDLVFLLDCPLDVMTDGERSIDGRQFYLRLAQRVMHLFSTRTSSGILYEVDARLRPSGEAGMLVSTIEAFADYQQNEAWTWEHQALVRARIVYGCPELQQKFDAIRQQILCRSREGSQLQQEVREMREKMRNHLGSKQRDIFDIKADEGGITDIEFIAQYLVLRYAATEPRLTRWSDNVRIFELMANYDIMPEAEAAALTRAYVTMRDEIHHLALQEQSSKVSADCFAAEREQVAASWHKWLVAAPSDV.

The segment at 1-440 (MLPLPSELQI…VFDHLIGDDA (440 aa)) is adenylyl removase. An adenylyl transferase region spans residues 449–950 (HGLYKSLWQD…KWLVAAPSDV (502 aa)).

Belongs to the GlnE family. The cofactor is Mg(2+).

It catalyses the reaction [glutamine synthetase]-O(4)-(5'-adenylyl)-L-tyrosine + phosphate = [glutamine synthetase]-L-tyrosine + ADP. The enzyme catalyses [glutamine synthetase]-L-tyrosine + ATP = [glutamine synthetase]-O(4)-(5'-adenylyl)-L-tyrosine + diphosphate. Its function is as follows. Involved in the regulation of glutamine synthetase GlnA, a key enzyme in the process to assimilate ammonia. When cellular nitrogen levels are high, the C-terminal adenylyl transferase (AT) inactivates GlnA by covalent transfer of an adenylyl group from ATP to specific tyrosine residue of GlnA, thus reducing its activity. Conversely, when nitrogen levels are low, the N-terminal adenylyl removase (AR) activates GlnA by removing the adenylyl group by phosphorolysis, increasing its activity. The regulatory region of GlnE binds the signal transduction protein PII (GlnB) which indicates the nitrogen status of the cell. This Yersinia enterocolitica serotype O:8 / biotype 1B (strain NCTC 13174 / 8081) protein is Bifunctional glutamine synthetase adenylyltransferase/adenylyl-removing enzyme.